The following is a 467-amino-acid chain: F-box only protein 6 (467 aa).

Residues 114-163 enclose the F-box domain; the sequence is QEIWQEFPQDLFEDVVSRLPMATFFQFRAVCRKWNALIDSDSFSRCFTEL. Kelch repeat units follow at residues 163–211, 252–305, and 406–456; these read LPQT…MASA, GMTL…NFKS, and CLGN…IACG.

This Arabidopsis thaliana (Mouse-ear cress) protein is F-box only protein 6 (FBX6).